The sequence spans 466 residues: MSTRSVSSSSYRRMFGGPGTGSRPSSTRSYVTTSTRTYSLGSALRPSTSRSLYASSPGGAYATRSSAVRLRSSVPGVRLLQDSVDFSLADAINTEFKNTRTNEKVELQELNDRFANYIDKVRFLEQQNKILLAELEQLKGQGKSRLGDLYEEEMRELRRQVDQLTNDKARVEVERDNLAEDIMRLREKLQEEMLQREEAESTLQSFRQDVDNASLARLDLERKVESLQEEIAFLKKLHDEEIQELQAQIQDQHVQIDMDVSKPDLTAALRDVRQQYESVAAKNLQEAEEWYKSKFADLSEAANRNNDALRQAKQESNEYRRQVQSLTCEVDALKGTNESLERQMREMEENFAVEAANYQDTIGRLQDEIQNMKEEMARHLREYQDLLNVKMALDIEIATYRKLLEGEESRIALPLPNFSSLNLRETNLDSLPLVDTHSKRTLLIKTVETRDGQVINETSQHHDDLE.

The segment covering 1 to 13 (MSTRSVSSSSYRR) has biased composition (low complexity). The interval 1–32 (MSTRSVSSSSYRRMFGGPGTGSRPSSTRSYVT) is disordered. Ser2 is subject to N-acetylserine. A head region spans residues 2–95 (STRSVSSSSY…FSLADAINTE (94 aa)). 5 positions are modified to phosphoserine: Ser5, Ser7, Ser8, Ser9, and Ser10. An O-linked (GlcNAc) serine; alternate glycan is attached at Ser7. At Thr20 the chain carries Phosphothreonine. Residues 21-32 (GSRPSSTRSYVT) are compositionally biased toward low complexity. Phosphoserine occurs at positions 25 and 26. An O-linked (GlcNAc) threonine glycan is attached at Thr33. Ser34, Ser39, Ser42, Ser47, Ser49, and Ser51 each carry phosphoserine. Ser34 carries an O-linked (GlcNAc) serine; alternate glycan. Tyr53 bears the Phosphotyrosine mark. Ser55 and Ser56 each carry phosphoserine. A Phosphotyrosine modification is found at Tyr61. A phosphoserine mark is found at Ser66, Ser72, Ser73, Ser83, and Ser87. The tract at residues 96–131 (FKNTRTNEKVELQELNDRFANYIDKVRFLEQQNKIL) is coil 1A. A coiled-coil region spans residues 96–131 (FKNTRTNEKVELQELNDRFANYIDKVRFLEQQNKIL). The IF rod domain maps to 103-411 (EKVELQELND…KLLEGEESRI (309 aa)). A Glycyl lysine isopeptide (Lys-Gly) (interchain with G-Cter in SUMO2) cross-link involves residue Lys104. Tyr117 carries the post-translational modification Phosphotyrosine. N6-acetyllysine; alternate occurs at positions 120, 129, and 139. An N6-succinyllysine; alternate mark is found at Lys120 and Lys129. Residues Lys120, Lys129, and Lys139 each participate in a glycyl lysine isopeptide (Lys-Gly) (interchain with G-Cter in SUMO2); alternate cross-link. Positions 132–153 (LAELEQLKGQGKSRLGDLYEEE) are linker 1. Ser144 carries the post-translational modification Phosphoserine. A coiled-coil region spans residues 154–245 (MRELRRQVDQ…KLHDEEIQEL (92 aa)). Residues 154–245 (MRELRRQVDQ…KLHDEEIQEL (92 aa)) are coil 1B. An N6-acetyllysine modification is found at Lys168. At Lys188 the chain carries N6-acetyllysine; alternate. Position 188 is an N6-succinyllysine; alternate (Lys188). A Phosphoserine modification is found at Ser214. N6-acetyllysine; alternate is present on Lys223. Residue Lys223 forms a Glycyl lysine isopeptide (Lys-Gly) (interchain with G-Cter in SUMO2); alternate linkage. Ser226 bears the Phosphoserine mark. N6-acetyllysine is present on Lys235. Residues 246-268 (QAQIQDQHVQIDMDVSKPDLTAA) form a linker 12 region. A Glycyl lysine isopeptide (Lys-Gly) (interchain with G-Cter in SUMO2) cross-link involves residue Lys262. The interval 269 to 407 (LRDVRQQYES…ATYRKLLEGE (139 aa)) is coil 2. Lys294 carries the post-translational modification N6-acetyllysine; alternate. Position 294 is an N6-succinyllysine; alternate (Lys294). Residue Lys294 forms a Glycyl lysine isopeptide (Lys-Gly) (interchain with G-Cter in SUMO2); alternate linkage. The residue at position 299 (Ser299) is a Phosphoserine. Positions 303–407 (NRNNDALRQA…ATYRKLLEGE (105 aa)) form a coiled coil. Lys313 is covalently cross-linked (Glycyl lysine isopeptide (Lys-Gly) (interchain with G-Cter in SUMO2)). Ser325 carries the phosphoserine modification. Residues 326-329 (LTCE) carry the [IL]-x-C-x-x-[DE] motif motif. Lys373 bears the N6-acetyllysine; alternate mark. Residue Lys373 forms a Glycyl lysine isopeptide (Lys-Gly) (interchain with G-Cter in SUMO2); alternate linkage. A tail region spans residues 408–466 (ESRIALPLPNFSSLNLRETNLDSLPLVDTHSKRTLLIKTVETRDGQVINETSQHHDDLE). Phosphoserine occurs at positions 409, 419, and 420. Position 426 is a phosphothreonine (Thr426). Ser430 is modified (phosphoserine). Position 436 is a phosphothreonine (Thr436). Ser438 bears the Phosphoserine mark. Lys439 is covalently cross-linked (Glycyl lysine isopeptide (Lys-Gly) (interchain with G-Cter in SUMO2)). Lys445 carries the N6-acetyllysine; alternate modification. Lys445 is modified (N6-succinyllysine; alternate). Residue Lys445 forms a Glycyl lysine isopeptide (Lys-Gly) (interchain with G-Cter in SUMO2); alternate linkage. Residue Lys445 forms a Glycyl lysine isopeptide (Lys-Gly) (interchain with G-Cter in SUMO1); alternate linkage. A phosphothreonine mark is found at Thr446 and Thr458. Position 459 is a phosphoserine (Ser459).

Belongs to the intermediate filament family. Homomer assembled from elementary dimers. Identified in complexes that contain VIM, EZR, AHNAK, BFSP1, BFSP2, ANK2, PLEC, PRX and spectrin. Interacts with BCAS3. Interacts with LGSN. Interacts with SYNM. Interacts (via rod region) with PLEC (via CH 1 domain). Interacts with STK33. Interacts with LARP6. Interacts with RAB8B. Interacts with TOR1A; the interaction associates TOR1A with the cytoskeleton. Interacts with TOR1AIP1. Interacts with TOR1AIP1. Interacts with DIAPH1. Interacts with EPPK1; interaction is dependent of higher-order structure of intermediate filament. Interacts with the non-receptor tyrosine kinase SRMS; the interaction leads to phosphorylation of VIM. Interacts with NOD2. Interacts (via head region) with CORO1C. Interacts with HDGF. Interacts with PRKCE (via phorbol-ester/DAG-type 2 domain). Interacts with BFSP2. Interacts with PPL. Interacts with PKP1 and PKP2. Interacts with SCRIB (via PDZ domains); the interaction protects SCRIB from proteasomal degradation and facilitates SCRIB localization to intermediate filaments, the interaction is reduced by cell contact inhibition. Filament disassembly during mitosis is promoted by phosphorylation at Ser-55 as well as by nestin. One of the most prominent phosphoproteins in various cells of mesenchymal origin. Phosphorylation is enhanced during cell division, at which time vimentin filaments are significantly reorganized. Phosphorylation by PKN1 inhibits the formation of filaments. Phosphorylated at Ser-56 by CDK5 during neutrophil secretion in the cytoplasm. Phosphorylated by STK33. Phosphorylated on tyrosine residues by SRMS. In terms of processing, O-glycosylated during cytokinesis at sites identical or close to phosphorylation sites, this interferes with the phosphorylation status. Post-translationally, S-nitrosylation is induced by interferon-gamma and oxidatively-modified low-densitity lipoprotein (LDL(ox)) possibly implicating the iNOS-S100A8/9 transnitrosylase complex.

It is found in the cytoplasm. The protein localises to the cytoskeleton. Its subcellular location is the nucleus matrix. The protein resides in the cell membrane. In terms of biological role, vimentins are class-III intermediate filaments found in various non-epithelial cells, especially mesenchymal cells. Vimentin is attached to the nucleus, endoplasmic reticulum, and mitochondria, either laterally or terminally. Plays a role in cell directional movement, orientation, cell sheet organization and Golgi complex polarization at the cell migration front. Protects SCRIB from proteasomal degradation and facilitates its localization to intermediate filaments in a cell contact-mediated manner. Its function is as follows. Involved with LARP6 in the stabilization of type I collagen mRNAs for CO1A1 and CO1A2. This is Vimentin (VIM) from Canis lupus familiaris (Dog).